A 912-amino-acid chain; its full sequence is Nitrate reductase [NADH] (912 aa).

Positions 1 to 99 (SVEPRQPFGR…PRDEGTADAW (99 aa)) are disordered. The span at 13–23 (APATAPTARAP) shows a compositional bias: low complexity. Residues 54 to 68 (AEEDEEDDDEDDEGH) are compositionally biased toward acidic residues. Residues 85–94 (PSTRDPRDEG) show a composition bias toward basic and acidic residues. Cys-186 is a binding site for Mo-molybdopterin. In terms of domain architecture, Cytochrome b5 heme-binding spans 535-610 (DKQFTMSEVR…LDTYRIGELI (76 aa)). His-570 and His-593 together coordinate heme. In terms of domain architecture, FAD-binding FR-type spans 651–764 (REKVPCRLVD…KGPLGHVEYT (114 aa)). FAD is bound by residues 703-706 (RAYT), 720-724 (LVKVY), Phe-725, Phe-732, 737-739 (LMT), Ser-788, and Thr-791.

It belongs to the nitrate reductase family. Homodimer. FAD is required as a cofactor. It depends on heme as a cofactor. Mo-molybdopterin serves as cofactor.

The catalysed reaction is nitrite + NAD(+) + H2O = nitrate + NADH + H(+). Nitrate reductase is a key enzyme involved in the first step of nitrate assimilation in plants, fungi and bacteria. This chain is Nitrate reductase [NADH], found in Hordeum vulgare (Barley).